The following is a 501-amino-acid chain: Probable histidine--tRNA ligase, mitochondrial (501 aa).

A disordered region spans residues 32 to 54 (TNSNNNNNNNNNNNNNNNNNKNI). Over residues 33 to 54 (NSNNNNNNNNNNNNNNNNNKNI) the composition is skewed to low complexity.

This sequence belongs to the class-II aminoacyl-tRNA synthetase family.

The protein localises to the mitochondrion matrix. The enzyme catalyses tRNA(His) + L-histidine + ATP = L-histidyl-tRNA(His) + AMP + diphosphate + H(+). In Dictyostelium discoideum (Social amoeba), this protein is Probable histidine--tRNA ligase, mitochondrial (mhisS).